The sequence spans 139 residues: Protein Turandot B (139 aa).

The N-terminal stretch at 1-21 (MNFKTALICFALLLIGTLCSA) is a signal peptide.

Belongs to the Turandot family.

It is found in the secreted. Functionally, a humoral factor that may play a role in stress tolerance. The sequence is that of Protein Turandot B from Drosophila simulans (Fruit fly).